Here is a 227-residue protein sequence, read N- to C-terminus: NAD(P)H-quinone oxidoreductase subunit K, chloroplastic (227 aa).

Residues cysteine 43, cysteine 44, cysteine 108, and cysteine 139 each contribute to the [4Fe-4S] cluster site.

It belongs to the complex I 20 kDa subunit family. In terms of assembly, NDH is composed of at least 16 different subunits, 5 of which are encoded in the nucleus. [4Fe-4S] cluster serves as cofactor.

The protein resides in the plastid. It localises to the chloroplast thylakoid membrane. It carries out the reaction a plastoquinone + NADH + (n+1) H(+)(in) = a plastoquinol + NAD(+) + n H(+)(out). The enzyme catalyses a plastoquinone + NADPH + (n+1) H(+)(in) = a plastoquinol + NADP(+) + n H(+)(out). NDH shuttles electrons from NAD(P)H:plastoquinone, via FMN and iron-sulfur (Fe-S) centers, to quinones in the photosynthetic chain and possibly in a chloroplast respiratory chain. The immediate electron acceptor for the enzyme in this species is believed to be plastoquinone. Couples the redox reaction to proton translocation, and thus conserves the redox energy in a proton gradient. The chain is NAD(P)H-quinone oxidoreductase subunit K, chloroplastic from Spinacia oleracea (Spinach).